A 1129-amino-acid chain; its full sequence is SMC5-SMC6 complex localization factor protein 2 (1129 aa).

Disordered regions lie at residues 71–178 (VKAR…SILN), 312–343 (NTSS…TEQA), and 955–1057 (MLYD…QLEG). The span at 72–87 (KARRHTLPHSSHRRSP) shows a compositional bias: basic residues. The span at 93-110 (LLFQQRPRNSSGQFTHNP) shows a compositional bias: polar residues. Basic and acidic residues-rich tracts occupy residues 112-130 (QKKD…KKEL) and 149-166 (RKSE…RPRV). Composition is skewed to polar residues over residues 169 to 178 (QATSSSSILN) and 324 to 343 (TGRS…TEQA). 2 stretches are compositionally biased toward acidic residues: residues 999 to 1014 (ESEE…EEDW) and 1033 to 1048 (SAED…EEES).

The protein belongs to the FAM178 family.

It localises to the nucleus. Its function is as follows. Plays a role in the DNA damage response (DDR) pathway by regulating postreplication repair of UV-damaged DNA and genomic stability maintenance. Promotes the recruitment of the SMC5-SMC6 complex to DNA lesions. This is SMC5-SMC6 complex localization factor protein 2 (slf2) from Danio rerio (Zebrafish).